A 767-amino-acid chain; its full sequence is RNA cytosine C(5)-methyltransferase NSUN2 (767 aa).

Residues 1 to 36 (MGRRSRGRRLQQQQRPEDAEDGAEGGGKRGEAGWEG) are disordered. K46 participates in a covalent cross-link: Glycyl lysine isopeptide (Lys-Gly) (interchain with G-Cter in SUMO2). S139 carries the phosphoserine; by AURKB modification. S-adenosyl-L-methionine contacts are provided by residues 184–190 (CAAPGSK), D215, D242, and D268. C321 acts as the Nucleophile in catalysis. The segment at 436–481 (NKRQPKLQGKSAETRESTQLSPADLTEGKPTDPSKLESPSFTGTGD) is disordered. Phosphoserine is present on S456. The segment covering 461–470 (TEGKPTDPSK) has biased composition (basic and acidic residues). Residues K464 and K470 each participate in a glycyl lysine isopeptide (Lys-Gly) (interchain with G-Cter in SUMO2) cross-link. A Phosphoserine modification is found at S473. Residues K511 and K516 each participate in a glycyl lysine isopeptide (Lys-Gly) (interchain with G-Cter in SUMO2) cross-link. An N6-acetyllysine; alternate modification is found at K586. K586 bears the N6-malonyllysine; alternate mark. K586 is covalently cross-linked (Glycyl lysine isopeptide (Lys-Gly) (interchain with G-Cter in SUMO2); alternate). Phosphoserine is present on S593. Glycyl lysine isopeptide (Lys-Gly) (interchain with G-Cter in SUMO2) cross-links involve residues K640, K654, and K660. Phosphothreonine is present on T718. Residues 719–730 (NESAASTGQPDN) show a composition bias toward polar residues. The interval 719-767 (NESAASTGQPDNDVTEGQRAGEPNSPDAEEANSPDVTAGCDPAGVHPPR) is disordered. 3 positions are modified to phosphoserine: S724, S743, and S751.

This sequence belongs to the class I-like SAM-binding methyltransferase superfamily. RsmB/NOP family. TRM4 subfamily. Interacts with NPM1 and NCL during interphase; interaction is disrupted following phosphorylation at Ser-139. Post-translationally, phosphorylated at Ser-139 by AURKB during mitosis, leading to abolish methyltransferase activity and the interaction with NPM1. In terms of tissue distribution, expressed in adult and fetal brain and in lymphoblastoid cells.

It is found in the nucleus. The protein localises to the nucleolus. It localises to the cytoplasm. Its subcellular location is the mitochondrion. The protein resides in the cytoskeleton. It is found in the spindle. The protein localises to the secreted. It localises to the extracellular exosome. The catalysed reaction is cytidine(48) in tRNA + S-adenosyl-L-methionine = 5-methylcytidine(48) in tRNA + S-adenosyl-L-homocysteine + H(+). The enzyme catalyses cytidine(49) in tRNA + S-adenosyl-L-methionine = 5-methylcytidine(49) in tRNA + S-adenosyl-L-homocysteine + H(+). It catalyses the reaction cytidine(50) in tRNA + S-adenosyl-L-methionine = 5-methylcytidine(50) in tRNA + S-adenosyl-L-homocysteine + H(+). It carries out the reaction cytidine(34) in tRNA precursor + S-adenosyl-L-methionine = 5-methylcytidine(34) in tRNA precursor + S-adenosyl-L-homocysteine + H(+). The catalysed reaction is a cytidine in mRNA + S-adenosyl-L-methionine = a 5-methylcytidine in mRNA + S-adenosyl-L-homocysteine + H(+). Its activity is regulated as follows. Inhibited by magnesium ions. Functionally, RNA cytosine C(5)-methyltransferase that methylates cytosine to 5-methylcytosine (m5C) in various RNAs, such as tRNAs, mRNAs and some long non-coding RNAs (lncRNAs). Involved in various processes, such as epidermal stem cell differentiation, testis differentiation and maternal to zygotic transition during early development: acts by increasing protein synthesis; cytosine C(5)-methylation promoting tRNA stability and preventing mRNA decay. Methylates cytosine to 5-methylcytosine (m5C) at positions 34 and 48 of intron-containing tRNA(Leu)(CAA) precursors, and at positions 48, 49 and 50 of tRNA(Gly)(GCC) precursors. tRNA methylation is required generation of RNA fragments derived from tRNAs (tRFs). Also mediates C(5)-methylation of mitochondrial tRNAs. Catalyzes cytosine C(5)-methylation of mRNAs, leading to stabilize them and prevent mRNA decay: mRNA stabilization involves YBX1 that specifically recognizes and binds m5C-modified transcripts. Cytosine C(5)-methylation of mRNAs also regulates mRNA export: methylated transcripts are specifically recognized by THOC4/ALYREF, which mediates mRNA nucleo-cytoplasmic shuttling. Also mediates cytosine C(5)-methylation of non-coding RNAs, such as vault RNAs (vtRNAs), promoting their processing into regulatory small RNAs. Cytosine C(5)-methylation of vtRNA VTRNA1.1 promotes its processing into small-vault RNA4 (svRNA4) and regulates epidermal differentiation. May act downstream of Myc to regulate epidermal cell growth and proliferation. Required for proper spindle assembly and chromosome segregation, independently of its methyltransferase activity. This is RNA cytosine C(5)-methyltransferase NSUN2 from Homo sapiens (Human).